Reading from the N-terminus, the 144-residue chain is Large ribosomal subunit protein uL15 (144 aa).

Residues 1–58 (MKLNTLSPAAGAKHAAKRVGRGIGSGLGKTAGRGHKGQKSRSGGSIRPGFEGGQMPLK) form a disordered region. A compositionally biased stretch (gly residues) spans 21 to 31 (RGIGSGLGKTA).

This sequence belongs to the universal ribosomal protein uL15 family. As to quaternary structure, part of the 50S ribosomal subunit.

Functionally, binds to the 23S rRNA. This is Large ribosomal subunit protein uL15 from Psychromonas ingrahamii (strain DSM 17664 / CCUG 51855 / 37).